The primary structure comprises 238 residues: Protein shisa-3 homolog (238 aa).

Residues 1 to 21 form the signal peptide; sequence MRALLALCLLLGWLRWGPAGA. The Lumenal portion of the chain corresponds to 22 to 98; that stretch reads QQSGEYCHGW…GITAQPVYVP (77 aa). A helical transmembrane segment spans residues 99–119; sequence FLIVGSIFIAFIILGSVVAIY. Residues 120–238 lie on the Cytoplasmic side of the membrane; that stretch reads CCTCLRPKEP…GKSCPDFSSS (119 aa). The interval 151 to 173 is disordered; sequence TSTSPRAPSRQSSTATSSSSTGG. A compositionally biased stretch (low complexity) spans 159–173; it reads SRQSSTATSSSSTGG.

This sequence belongs to the shisa family.

The protein localises to the endoplasmic reticulum membrane. Functionally, plays an essential role in the maturation of presomitic mesoderm cells by individual attenuation of both FGF and WNT signaling. The polypeptide is Protein shisa-3 homolog (SHISA3) (Homo sapiens (Human)).